The chain runs to 429 residues: Adenylosuccinate synthetase (429 aa).

GTP contacts are provided by residues 13 to 19 (GDEGKGK) and 41 to 43 (GHT). D14 serves as the catalytic Proton acceptor. D14 and G41 together coordinate Mg(2+). IMP is bound by residues 14-17 (DEGK), 39-42 (NAGH), T130, R144, Q225, T240, and R304. The Proton donor role is filled by H42. Position 300 to 306 (300 to 306 (ATTGRAR)) interacts with substrate. Residues R306, 332-334 (KLD), and 413-415 (STG) each bind GTP.

It belongs to the adenylosuccinate synthetase family. Homodimer. The cofactor is Mg(2+).

It localises to the cytoplasm. The enzyme catalyses IMP + L-aspartate + GTP = N(6)-(1,2-dicarboxyethyl)-AMP + GDP + phosphate + 2 H(+). Its pathway is purine metabolism; AMP biosynthesis via de novo pathway; AMP from IMP: step 1/2. Its function is as follows. Plays an important role in the de novo pathway of purine nucleotide biosynthesis. Catalyzes the first committed step in the biosynthesis of AMP from IMP. The protein is Adenylosuccinate synthetase of Pseudomonas fluorescens (strain SBW25).